A 448-amino-acid polypeptide reads, in one-letter code: High mobility group B protein 15 (448 aa).

The region spanning 29–120 is the ARID domain; that stretch reads VADPRLFMTS…LLNNYEQIYF (92 aa). The span at 219–236 shows a compositional bias: polar residues; sequence PQQSHGVLPNTLNISANP. 3 disordered regions span residues 219 to 270, 333 to 352, and 366 to 448; these read PQQS…RSGY, KKNG…LPEQ, and VEED…AEQN. Basic residues predominate over residues 244 to 255; the sequence is TKRRRRRKKSEI. The HMG box DNA-binding region spans 263–330; the sequence is PKPNRSGYNF…RYRTEMEDYR (68 aa). The segment covering 389-398 has biased composition (acidic residues); that stretch reads SIETDPELEE. The segment covering 399–412 has biased composition (low complexity); that stretch reads PSLNPSGPNLNPNP.

It belongs to the HMGB family.

It localises to the nucleus. In terms of biological role, binds preferentially DNA with A/T-rich content. This Arabidopsis thaliana (Mouse-ear cress) protein is High mobility group B protein 15 (HMGB15).